Here is a 1020-residue protein sequence, read N- to C-terminus: Carbamoyl phosphate synthase arginine-specific large chain (1020 aa).

A carboxyphosphate synthetic domain region spans residues 1-401 (MPKNNAIHSI…ATLKAIASLE (401 aa)). Residues R129, R169, G175, G176, Q208, I210, E215, G241, I242, H243, Q284, and E298 each contribute to the ATP site. Residues 133–327 (KTLMKRLHQP…IAKIAADIAI (195 aa)) enclose the ATP-grasp 1 domain. Mg(2+)-binding residues include Q284, E298, and N300. Positions 284, 298, and 300 each coordinate Mn(2+). Oligomerization domain regions lie at residues 402–542 (IDPK…FGQT) and 402–544 (IDPK…QTNE). 2 carbamoyl phosphate synthetic domain regions span residues 543 to 927 (NESH…ADSY) and 544 to 927 (ESHP…ADSY). In terms of domain architecture, ATP-grasp 2 spans 669 to 858 (ADCLRLLKIA…LAQLATRLIL (190 aa)). Residues R705, Q744, L746, E750, G775, V776, H777, S778, and Q818 each coordinate ATP. The Mg(2+) site is built by Q818 and N831. Q818 and N831 together coordinate Mn(2+). One can recognise an MGS-like domain in the interval 927 to 1020 (YHLETWQTVD…LAVTPTPATI (94 aa)). The allosteric domain stretch occupies residues 928–1020 (HLETWQTVDG…LAVTPTPATI (93 aa)).

It belongs to the CarB family. In terms of assembly, composed of two chains; the small (or glutamine) chain promotes the hydrolysis of glutamine to ammonia, which is used by the large (or ammonia) chain to synthesize carbamoyl phosphate. Tetramer of heterodimers (alpha,beta)4. The cofactor is Mg(2+). It depends on Mn(2+) as a cofactor.

The enzyme catalyses hydrogencarbonate + L-glutamine + 2 ATP + H2O = carbamoyl phosphate + L-glutamate + 2 ADP + phosphate + 2 H(+). It catalyses the reaction hydrogencarbonate + NH4(+) + 2 ATP = carbamoyl phosphate + 2 ADP + phosphate + 2 H(+). Its pathway is amino-acid biosynthesis; L-arginine biosynthesis; carbamoyl phosphate from bicarbonate: step 1/1. Its function is as follows. Large subunit of the glutamine-dependent carbamoyl phosphate synthetase (CPSase). CPSase catalyzes the formation of carbamoyl phosphate from the ammonia moiety of glutamine, carbonate, and phosphate donated by ATP, constituting the first step of the biosynthetic pathway leading to arginine and/or urea. The large subunit (synthetase) binds the substrates ammonia (free or transferred from glutamine from the small subunit), hydrogencarbonate and ATP and carries out an ATP-coupled ligase reaction, activating hydrogencarbonate by forming carboxy phosphate which reacts with ammonia to form carbamoyl phosphate. In Lactiplantibacillus plantarum (strain ATCC BAA-793 / NCIMB 8826 / WCFS1) (Lactobacillus plantarum), this protein is Carbamoyl phosphate synthase arginine-specific large chain.